The sequence spans 184 residues: GTP cyclohydrolase 1 (184 aa).

Zn(2+)-binding residues include Cys-75, His-78, and Cys-146.

Belongs to the GTP cyclohydrolase I family. Homomer.

The catalysed reaction is GTP + H2O = 7,8-dihydroneopterin 3'-triphosphate + formate + H(+). Its pathway is cofactor biosynthesis; 7,8-dihydroneopterin triphosphate biosynthesis; 7,8-dihydroneopterin triphosphate from GTP: step 1/1. In Streptococcus pneumoniae (strain Taiwan19F-14), this protein is GTP cyclohydrolase 1.